The chain runs to 181 residues: Alkyl hydroperoxide reductase AhpD (181 aa).

Catalysis depends on C130, which acts as the Proton donor. A disulfide bond links C130 and C133. C133 functions as the Cysteine sulfenic acid (-SOH) intermediate in the catalytic mechanism.

It belongs to the AhpD family.

The catalysed reaction is N(6)-[(R)-dihydrolipoyl]-L-lysyl-[lipoyl-carrier protein] + a hydroperoxide = N(6)-[(R)-lipoyl]-L-lysyl-[lipoyl-carrier protein] + an alcohol + H2O. Functionally, antioxidant protein with alkyl hydroperoxidase activity. Required for the reduction of the AhpC active site cysteine residues and for the regeneration of the AhpC enzyme activity. This is Alkyl hydroperoxide reductase AhpD from Gluconacetobacter diazotrophicus (strain ATCC 49037 / DSM 5601 / CCUG 37298 / CIP 103539 / LMG 7603 / PAl5).